Reading from the N-terminus, the 505-residue chain is 2,3-bisphosphoglycerate-independent phosphoglycerate mutase (505 aa).

Mn(2+) is bound by residues D11 and S61. S61 acts as the Phosphoserine intermediate in catalysis. Substrate-binding positions include H122, 152–153 (RD), R183, R189, 259–262 (RTDR), and K332. The Mn(2+) site is built by D399, H403, D440, H441, and H458.

It belongs to the BPG-independent phosphoglycerate mutase family. Monomer. Mn(2+) serves as cofactor.

It catalyses the reaction (2R)-2-phosphoglycerate = (2R)-3-phosphoglycerate. It participates in carbohydrate degradation; glycolysis; pyruvate from D-glyceraldehyde 3-phosphate: step 3/5. In terms of biological role, catalyzes the interconversion of 2-phosphoglycerate and 3-phosphoglycerate. The polypeptide is 2,3-bisphosphoglycerate-independent phosphoglycerate mutase (Flavobacterium psychrophilum (strain ATCC 49511 / DSM 21280 / CIP 103535 / JIP02/86)).